Here is a 254-residue protein sequence, read N- to C-terminus: Phosphoribosylaminoimidazole-succinocarboxamide synthase (254 aa).

This sequence belongs to the SAICAR synthetase family.

It carries out the reaction 5-amino-1-(5-phospho-D-ribosyl)imidazole-4-carboxylate + L-aspartate + ATP = (2S)-2-[5-amino-1-(5-phospho-beta-D-ribosyl)imidazole-4-carboxamido]succinate + ADP + phosphate + 2 H(+). Its pathway is purine metabolism; IMP biosynthesis via de novo pathway; 5-amino-1-(5-phospho-D-ribosyl)imidazole-4-carboxamide from 5-amino-1-(5-phospho-D-ribosyl)imidazole-4-carboxylate: step 1/2. The polypeptide is Phosphoribosylaminoimidazole-succinocarboxamide synthase (Sinorhizobium fredii (strain NBRC 101917 / NGR234)).